Here is a 370-residue protein sequence, read N- to C-terminus: 4-hydroxy-3-methylbut-2-en-1-yl diphosphate synthase (flavodoxin) (370 aa).

Residues C268, C271, C303, and E310 each coordinate [4Fe-4S] cluster.

This sequence belongs to the IspG family. [4Fe-4S] cluster is required as a cofactor.

The enzyme catalyses (2E)-4-hydroxy-3-methylbut-2-enyl diphosphate + oxidized [flavodoxin] + H2O + 2 H(+) = 2-C-methyl-D-erythritol 2,4-cyclic diphosphate + reduced [flavodoxin]. It participates in isoprenoid biosynthesis; isopentenyl diphosphate biosynthesis via DXP pathway; isopentenyl diphosphate from 1-deoxy-D-xylulose 5-phosphate: step 5/6. In terms of biological role, converts 2C-methyl-D-erythritol 2,4-cyclodiphosphate (ME-2,4cPP) into 1-hydroxy-2-methyl-2-(E)-butenyl 4-diphosphate. The chain is 4-hydroxy-3-methylbut-2-en-1-yl diphosphate synthase (flavodoxin) from Bacillus licheniformis (strain ATCC 14580 / DSM 13 / JCM 2505 / CCUG 7422 / NBRC 12200 / NCIMB 9375 / NCTC 10341 / NRRL NRS-1264 / Gibson 46).